Here is a 670-residue protein sequence, read N- to C-terminus: Major fimbrium tip subunit FimD (670 aa).

The N-terminal stretch at methionine 1–glycine 24 is a signal peptide. Cysteine 25 carries the N-palmitoyl cysteine lipid modification. Cysteine 25 is lipidated: S-diacylglycerol cysteine. A propeptide spanning residues cysteine 25–arginine 50 is cleaved from the precursor.

Belongs to the FimD family. Fimbriae are composed of a major, structural subunit and the minor components FimC, FimD and FimE. Identified in a complex composed of FimC, FimD and FimE (in vitro). The complex interacts with host extracellular matrix proteins, including fibronectin and type I collagen. Interacts with host CXCR4.

The protein resides in the fimbrium. The protein localises to the cell outer membrane. Functionally, probably a component of the fimbrium tip. These long, filamentous pili are attached to the cell surface; they mediate biofilm formation, adhesion onto host cells and onto other bacteria that are part of the oral microbiome. They play an important role in invasion of periodontal tissues and are major virulence factors. FimC, FimD and FimE contribute to interaction with host CXCR4 and thereby down-regulate the TLR2-mediated host immune response. The sequence is that of Major fimbrium tip subunit FimD from Porphyromonas gingivalis (strain ATCC 33277 / DSM 20709 / CIP 103683 / JCM 12257 / NCTC 11834 / 2561).